A 101-amino-acid polypeptide reads, in one-letter code: Small ribosomal subunit protein uS14 (101 aa).

It belongs to the universal ribosomal protein uS14 family. In terms of assembly, part of the 30S ribosomal subunit. Contacts proteins S3 and S10.

Binds 16S rRNA, required for the assembly of 30S particles and may also be responsible for determining the conformation of the 16S rRNA at the A site. This is Small ribosomal subunit protein uS14 from Enterobacter sp. (strain 638).